The following is a 43-amino-acid chain: Cytochrome b559 subunit beta (43 aa).

A helical transmembrane segment spans residues 18–34 (WLAIHGLAIPTVFFFGA). Histidine 22 is a binding site for heme.

It belongs to the PsbE/PsbF family. Heterodimer of an alpha subunit and a beta subunit. PSII is composed of 1 copy each of membrane proteins PsbA, PsbB, PsbC, PsbD, PsbE, PsbF, PsbH, PsbI, PsbJ, PsbK, PsbL, PsbM, PsbT, PsbY, PsbZ, Psb30/Ycf12, at least 3 peripheral proteins of the oxygen-evolving complex and a large number of cofactors. It forms dimeric complexes. The cofactor is heme b.

The protein resides in the plastid. It is found in the chloroplast thylakoid membrane. This b-type cytochrome is tightly associated with the reaction center of photosystem II (PSII). PSII is a light-driven water:plastoquinone oxidoreductase that uses light energy to abstract electrons from H(2)O, generating O(2) and a proton gradient subsequently used for ATP formation. It consists of a core antenna complex that captures photons, and an electron transfer chain that converts photonic excitation into a charge separation. The chain is Cytochrome b559 subunit beta from Cyanidium caldarium (Red alga).